Consider the following 208-residue polypeptide: MSKYIGPDCRLCRREGMKLFLKGDRCYTEKCAFARRPYPPGQHGQERKKLSEYGMQLREKQKVKRIYGVLETQFRRYFEMAEKMKGIAGENLLSLLERRLDNVVYRLGFASSRGEARLLVSHAHFKVNGRTVNIPSYLVKVGDVIEVDERSKSKTRFVEIKEKYAKKPSPKWLEKDAENLVGKVIALPTREDIDMPIREHLIVELYSK.

The 63-residue stretch at 98-160 (RRLDNVVYRL…SKSKTRFVEI (63 aa)) folds into the S4 RNA-binding domain.

The protein belongs to the universal ribosomal protein uS4 family. Part of the 30S ribosomal subunit. Contacts protein S5. The interaction surface between S4 and S5 is involved in control of translational fidelity.

Its function is as follows. One of the primary rRNA binding proteins, it binds directly to 16S rRNA where it nucleates assembly of the body of the 30S subunit. In terms of biological role, with S5 and S12 plays an important role in translational accuracy. The polypeptide is Small ribosomal subunit protein uS4 (Caldicellulosiruptor bescii (strain ATCC BAA-1888 / DSM 6725 / KCTC 15123 / Z-1320) (Anaerocellum thermophilum)).